Here is an 807-residue protein sequence, read N- to C-terminus: Mechanosensitive cation channel TMEM63A (807 aa).

The Extracellular portion of the chain corresponds to 1–51 (MTDSPFLELWQSRAVSVREQLGLGDRPNDSYCYNSAKNSTVLQGVTFGGIP). The N-linked (GlcNAc...) asparagine glycan is linked to Asn-38. Residues 52 to 74 (TVLLIDVSCFLFLILVFSIIRRR) traverse the membrane as a helical segment. Over 75–134 (FWDYGRIALVSEADSEPRFQRLSSTSSSGQQDFENELGCCPWLTAIFRLHDDQILEWCGE) the chain is Cytoplasmic. The chain crosses the membrane as a helical span at residues 135-167 (DAIHYLSFQRHIIFLLVVVSFLSLCVILPVNLS). Topologically, residues 168-191 (GDLLDKDPYSFGRTTIANLQTDND) are extracellular. A helical membrane pass occupies residues 192–217 (LLWLHTIFAVIYLFLTVGFMRHHTQS). The Cytoplasmic segment spans residues 218 to 416 (IKYKEENLVR…CWKNLSIQGL (199 aa)). The tract at residues 219–414 (KYKEENLVRR…DICWKNLSIQ (196 aa)) is intracellular linker IL2; confers mechanosensitivity. Residues 417–444 (RWWLQWLGINFTLFLGLFFLTTPSIILS) traverse the membrane as a helical segment. The Extracellular segment spans residues 445–462 (TMDKFNVTKPIHALNNPI). A glycan (N-linked (GlcNAc...) asparagine) is linked at Asn-450. The chain crosses the membrane as a helical span at residues 463-490 (ISQFFPTLLLWSFSALLPSIVYYSTLLE). The Cytoplasmic segment spans residues 491-495 (SHWTK). Residues 496 to 532 (SGENQIMMTKVYIFLIFMVLILPSLGLTSLDFFFRWL) form a helical membrane-spanning segment. The Extracellular segment spans residues 533–554 (FDKTSSEASIRLECVFLPDQGA). A helical membrane pass occupies residues 555–586 (FFVNYVIASAFIGNGMELLRLPGLILYTFRMI). Residues 555-586 (FFVNYVIASAFIGNGMELLRLPGLILYTFRMI) are gating helix. At 587 to 606 (MAKTAADRRNVKQNQAFQYE) the chain is on the cytoplasmic side. The chain crosses the membrane as a helical span at residues 607–624 (FGAMYAWMLCVFTVIMAY). Over 625-628 (SITC) the chain is Extracellular. A helical membrane pass occupies residues 629–651 (PIIAPFGLIYILLKHMVDRHNLY). At 652–661 (FIYLPAKLEK) the chain is on the cytoplasmic side. Residues 662-689 (GIHFAAVNQALAAPILCLFWLYFFSFLR) traverse the membrane as a helical segment. Topologically, residues 690–694 (LGMKA) are extracellular. The helical transmembrane segment at 695–709 (PATLFTFLVVLLTIL) threads the bilayer. The Cytoplasmic portion of the chain corresponds to 710–807 (VCLAHTCFGY…GSVAAAPQEA (98 aa)). A Phosphoserine modification is found at Ser-739.

Belongs to the CSC1 (TC 1.A.17) family. In terms of assembly, monomer. Post-translationally, N-Glycosylated.

It is found in the lysosome membrane. It localises to the early endosome membrane. The protein resides in the cell membrane. It catalyses the reaction Ca(2+)(in) = Ca(2+)(out). Mechanosensitive cation channel with low conductance and high activation threshold. In contrast to TMEM63B, does not show phospholipid scramblase activity. Acts as a regulator of lysosomal morphology by mediating lysosomal mechanosensitivity. Important for the baby's first breath and respiration throughout life. Upon lung inflation conducts cation currents in alveolar type 1 and 2 cells triggering lamellar body exocytosis and surfactant secretion into airspace. Also acts as an osmosensitive cation channel preferentially activated by hypotonic stress. This chain is Mechanosensitive cation channel TMEM63A (TMEM63A), found in Pongo abelii (Sumatran orangutan).